Here is a 71-residue protein sequence, read N- to C-terminus: Small ribosomal subunit protein bS21 (71 aa).

Basic residues predominate over residues 50–59; the sequence is AAAVKRHAKK. Residues 50-71 are disordered; the sequence is AAAVKRHAKKVQREQRRAVRLY. Basic and acidic residues predominate over residues 60 to 71; it reads VQREQRRAVRLY.

The protein belongs to the bacterial ribosomal protein bS21 family.

This chain is Small ribosomal subunit protein bS21, found in Pseudomonas entomophila (strain L48).